The sequence spans 90 residues: Small ribosomal subunit protein uS15 (90 aa).

It belongs to the universal ribosomal protein uS15 family. In terms of assembly, part of the 30S ribosomal subunit. Forms a bridge to the 50S subunit in the 70S ribosome, contacting the 23S rRNA.

In terms of biological role, one of the primary rRNA binding proteins, it binds directly to 16S rRNA where it helps nucleate assembly of the platform of the 30S subunit by binding and bridging several RNA helices of the 16S rRNA. Functionally, forms an intersubunit bridge (bridge B4) with the 23S rRNA of the 50S subunit in the ribosome. This is Small ribosomal subunit protein uS15 from Helicobacter pylori (strain Shi470).